Reading from the N-terminus, the 473-residue chain is tRNA modification GTPase MnmE (473 aa).

(6S)-5-formyl-5,6,7,8-tetrahydrofolate contacts are provided by R30, E95, and R134. Positions 230-394 (GVSTVIAGRP…LKLLMASMVE (165 aa)) constitute a TrmE-type G domain. Residues 240–245 (NAGKST), 259–265 (SHMPGTT), and 284–287 (DTAG) each bind GTP. Positions 244 and 265 each coordinate Mg(2+). A (6S)-5-formyl-5,6,7,8-tetrahydrofolate-binding site is contributed by K473.

Belongs to the TRAFAC class TrmE-Era-EngA-EngB-Septin-like GTPase superfamily. TrmE GTPase family. In terms of assembly, homodimer. Heterotetramer of two MnmE and two MnmG subunits. Requires K(+) as cofactor.

It is found in the cytoplasm. In terms of biological role, exhibits a very high intrinsic GTPase hydrolysis rate. Involved in the addition of a carboxymethylaminomethyl (cmnm) group at the wobble position (U34) of certain tRNAs, forming tRNA-cmnm(5)s(2)U34. This chain is tRNA modification GTPase MnmE, found in Chlorobium luteolum (strain DSM 273 / BCRC 81028 / 2530) (Pelodictyon luteolum).